Here is a 314-residue protein sequence, read N- to C-terminus: uncharacterized protein (314 aa).

The protein to M.leprae ML0607.

This is an uncharacterized protein from Mycobacterium bovis (strain ATCC BAA-935 / AF2122/97).